The chain runs to 436 residues: Coiled-coil domain-containing protein 71 (436 aa).

Positions 95 to 119 (ATSLPARAPQTAKSVPTGQTTLLPV) are disordered. Positions 105 to 116 (TAKSVPTGQTTL) are enriched in polar residues. Ser129 is subject to Phosphoserine. Disordered regions lie at residues 210 to 258 (LRKG…MKGR) and 314 to 405 (ALRG…KVDR). The stretch at 264-334 (KTVRGKAPRT…QAKAKAARTK (71 aa)) forms a coiled coil. Basic residues predominate over residues 329 to 340 (KAARTKHKKRPK). Polar residues predominate over residues 344 to 359 (QTRTGRTSLKNSSETV). Positions 373 to 386 (PPKKRARCVPRSKA) are enriched in basic residues.

The protein is Coiled-coil domain-containing protein 71 (Ccdc71) of Rattus norvegicus (Rat).